A 197-amino-acid chain; its full sequence is GTP cyclohydrolase-2 (197 aa).

A GTP-binding site is contributed by 50-54 (RIHSE). Residues C55, C66, and C68 each coordinate Zn(2+). GTP contacts are provided by residues Q71, 93-95 (EGR), and T115. The Proton acceptor role is filled by D127. Residue R129 is the Nucleophile of the active site. GTP contacts are provided by T150 and K155.

It belongs to the GTP cyclohydrolase II family. The cofactor is Zn(2+).

The enzyme catalyses GTP + 4 H2O = 2,5-diamino-6-hydroxy-4-(5-phosphoribosylamino)-pyrimidine + formate + 2 phosphate + 3 H(+). The protein operates within cofactor biosynthesis; riboflavin biosynthesis; 5-amino-6-(D-ribitylamino)uracil from GTP: step 1/4. Its function is as follows. Catalyzes the conversion of GTP to 2,5-diamino-6-ribosylamino-4(3H)-pyrimidinone 5'-phosphate (DARP), formate and pyrophosphate. The protein is GTP cyclohydrolase-2 of Neisseria meningitidis serogroup A / serotype 4A (strain DSM 15465 / Z2491).